Reading from the N-terminus, the 320-residue chain is ATP-dependent 6-phosphofructokinase (320 aa).

Gly-12 contacts ATP. 22–26 (RAVVR) contacts ADP. ATP is bound by residues 73–74 (RF) and 103–106 (GDGS). Position 104 (Asp-104) interacts with Mg(2+). Residue 126 to 128 (TID) participates in substrate binding. The active-site Proton acceptor is Asp-128. An ADP-binding site is contributed by Arg-155. Residues Arg-163 and 170–172 (MGR) each bind substrate. ADP is bound by residues 186–188 (GAE) and 214–216 (KNH). Residues Glu-223, Arg-244, and 250 to 253 (HIQR) contribute to the substrate site.

It belongs to the phosphofructokinase type A (PFKA) family. ATP-dependent PFK group I subfamily. Prokaryotic clade 'B1' sub-subfamily. In terms of assembly, homotetramer. It depends on Mg(2+) as a cofactor.

It localises to the cytoplasm. The enzyme catalyses beta-D-fructose 6-phosphate + ATP = beta-D-fructose 1,6-bisphosphate + ADP + H(+). The protein operates within carbohydrate degradation; glycolysis; D-glyceraldehyde 3-phosphate and glycerone phosphate from D-glucose: step 3/4. Its activity is regulated as follows. Allosterically activated by ADP and other diphosphonucleosides, and allosterically inhibited by phosphoenolpyruvate. Catalyzes the phosphorylation of D-fructose 6-phosphate to fructose 1,6-bisphosphate by ATP, the first committing step of glycolysis. In Teredinibacter turnerae (strain ATCC 39867 / T7901), this protein is ATP-dependent 6-phosphofructokinase.